The sequence spans 746 residues: Histone-lysine N-methyltransferase EZH2 (746 aa).

Positions 1–340 are interaction with DNMT1, DNMT3A and DNMT3B; the sequence is MGQTGKKSEK…AKEFAAALTA (340 aa). Position 21 is a phosphoserine; by PKB/AKT1 (Ser-21). Residues 39–68 are interaction with EED; that stretch reads KSMFSSNRQKILERTEILNQEWKQRRIQPV. Ser-75 carries O-linked (GlcNAc) serine glycosylation. Residue Ser-76 is modified to Phosphoserine. Positions 180-222 are disordered; sequence QYNDDDDDDDGDDPEEREEKQKDLEDHRDDKESRPPRKFPSDK. The span at 182 to 195 shows a compositional bias: acidic residues; it reads NDDDDDDDGDDPEE. A compositionally biased stretch (basic and acidic residues) spans 196–222; it reads REEKQKDLEDHRDDKESRPPRKFPSDK. Positions 329 to 522 are interaction with CDYL; that stretch reads EGAKEFAAAL…SSNHVYNYQP (194 aa). Position 339 is a phosphothreonine (Thr-339). Positions 340–426 are disordered; it reads AERIKTPPKR…PIKMKPNIEP (87 aa). Thr-345 is modified (phosphothreonine; by CDK1 and CDK2). Residues 345 to 357 show a composition bias toward basic residues; that stretch reads TPPKRPGGRRRGR. 2 positions are modified to phosphoserine: Ser-363 and Ser-366. Thr-367 bears the Phosphothreonine mark. A compositionally biased stretch (basic and acidic residues) spans 374 to 385; sequence ESKDTDSDREAG. A Phosphothreonine modification is found at Thr-487. A CXC domain is found at 503 to 605; it reads CRKIQLKKDG…SKNVSCKNCS (103 aa). Residues 612–727 form the SET domain; that stretch reads KHLLLAPSDV…TGEELFFDYR (116 aa). Lys-634 participates in a covalent cross-link: Glycyl lysine isopeptide (Lys-Gly) (interchain with G-Cter in SUMO2).

The protein belongs to the class V-like SAM-binding methyltransferase superfamily. Histone-lysine methyltransferase family. EZ subfamily. Component of the PRC2/EED-EZH2 complex, which includes EED, EZH2, SUZ12, RBBP4 and RBBP7 and possibly AEBP2. The minimum components required for methyltransferase activity of the PRC2/EED-EZH2 complex are EED, EZH2 and SUZ12. The PRC2 complex may also interact with DNMT1, DNMT3A, DNMT3B and PHF1 via the EZH2 subunit and with SIRT1 via the SUZ12 subunit. Interacts with HDAC1 and HDAC2. Binds ATRX via the SET domain. Interacts with PRAME. Interacts with CDYL. Interacts with BMAL1, CLOCK and CRY1. Interacts with DNMT3L; the interaction is direct. Interacts with EZHIP; the interaction blocks EZH2 methyltransferase activity. Interacts with ZNF263; recruited to the SIX3 promoter along with other proteins involved in chromatin modification and transcriptional corepression where it contributes to transcriptional repression. Interacts with ARMC12. Interacts with ZMYND8; the interaction is dependent on the presence of chromatin. Interacts with DDX18; this interaction inhibits the PRC2 complex. Post-translationally, phosphorylated by AKT1. Phosphorylation by AKT1 reduces methyltransferase activity. Phosphorylation at Thr-345 by CDK1 and CDK2 promotes maintenance of H3K27me3 levels at EZH2-target loci, thus leading to epigenetic gene silencing. Sumoylated. In terms of processing, glycosylated: O-GlcNAcylation at Ser-75 by OGT increases stability of EZH2 and facilitates the formation of H3K27me3 by the PRC2/EED-EZH2 complex.

It is found in the nucleus. It catalyses the reaction L-lysyl(27)-[histone H3] + 3 S-adenosyl-L-methionine = N(6),N(6),N(6)-trimethyl-L-lysyl(27)-[histone H3] + 3 S-adenosyl-L-homocysteine + 3 H(+). Polycomb group (PcG) protein. Catalytic subunit of the PRC2/EED-EZH2 complex, which methylates 'Lys-9' (H3K9me) and 'Lys-27' (H3K27me) of histone H3, leading to transcriptional repression of the affected target gene. Able to mono-, di- and trimethylate 'Lys-27' of histone H3 to form H3K27me1, H3K27me2 and H3K27me3, respectively. Displays a preference for substrates with less methylation, loses activity when progressively more methyl groups are incorporated into H3K27, H3K27me0 &gt; H3K27me1 &gt; H3K27me2. Compared to EZH1-containing complexes, it is more abundant in embryonic stem cells and plays a major role in forming H3K27me3, which is required for embryonic stem cell identity and proper differentiation. The PRC2/EED-EZH2 complex may also serve as a recruiting platform for DNA methyltransferases, thereby linking two epigenetic repression systems. EZH2 can also methylate non-histone proteins such as the transcription factor GATA4 and the nuclear receptor RORA. Regulates the circadian clock via histone methylation at the promoter of the circadian genes. Essential for the CRY1/2-mediated repression of the CLOCK-BMAL1 transcriptional activation of PER1/2. Involved in the di and trimethylation of 'Lys-27' of histone H3 on PER1/2 promoters which is necessary for the CRY1/2 proteins to inhibit transcription. This is Histone-lysine N-methyltransferase EZH2 (EZH2) from Macaca fascicularis (Crab-eating macaque).